Reading from the N-terminus, the 187-residue chain is Large ribosomal subunit protein uL10 (187 aa).

This sequence belongs to the universal ribosomal protein uL10 family. Part of the ribosomal stalk of the 50S ribosomal subunit. The N-terminus interacts with L11 and the large rRNA to form the base of the stalk. The C-terminus forms an elongated spine to which L12 dimers bind in a sequential fashion forming a multimeric L10(L12)X complex.

Its function is as follows. Forms part of the ribosomal stalk, playing a central role in the interaction of the ribosome with GTP-bound translation factors. The sequence is that of Large ribosomal subunit protein uL10 from Synechococcus sp. (strain JA-3-3Ab) (Cyanobacteria bacterium Yellowstone A-Prime).